The chain runs to 136 residues: Large ribosomal subunit protein uL16 (136 aa).

The protein belongs to the universal ribosomal protein uL16 family. In terms of assembly, part of the 50S ribosomal subunit.

In terms of biological role, binds 23S rRNA and is also seen to make contacts with the A and possibly P site tRNAs. In Shewanella baltica (strain OS155 / ATCC BAA-1091), this protein is Large ribosomal subunit protein uL16.